Here is a 138-residue protein sequence, read N- to C-terminus: MFMQTKHIAQATVKVLQSYLTYQAVLRIQSELGETNPPQAIWLNQYLASHSIQNGETFLTELLDENKELVLRILAVREDIAESVLDFLPGMTRNSLAESNIAHRRHLLERLTRTVAEVDNFPSETSNGESNNNDSPPS.

The interval 118–138 (VDNFPSETSNGESNNNDSPPS) is disordered. Residues 122–138 (PSETSNGESNNNDSPPS) show a composition bias toward polar residues.

The protein belongs to the RbcX family. Homodimer. Interacts with the exposed C-terminal peptide of RbcL via its central cleft, contacts a second RbcL monomer via its peripheral polar surface.

It is found in the carboxysome. Its subcellular location is the cytoplasm. Functionally, an RbcL-specific chaperone. The central cleft of the RbcX homodimer (RbcX2) binds the C-terminus of an RbcL monomer, stabilizing the C-terminus and probably preventing its reassociation with chaperonin GroEL-ES. At the same time the peripheral region of RbcX2 binds a second RbcL monomer, bridging the RbcL homodimers in the correct orientation. The RbcX2(2)-bound RbcL dimers then assemble into the RbcL8 core (RbcL8-(RbcX2)8). RbcS binding triggers the release of RbcX2. The chain is RuBisCO chaperone RbcX from Synechocystis sp. (strain ATCC 27184 / PCC 6803 / Kazusa).